We begin with the raw amino-acid sequence, 481 residues long: Proline--tRNA ligase (481 aa).

The protein belongs to the class-II aminoacyl-tRNA synthetase family. ProS type 3 subfamily. Homodimer.

The protein localises to the cytoplasm. The catalysed reaction is tRNA(Pro) + L-proline + ATP = L-prolyl-tRNA(Pro) + AMP + diphosphate. Functionally, catalyzes the attachment of proline to tRNA(Pro) in a two-step reaction: proline is first activated by ATP to form Pro-AMP and then transferred to the acceptor end of tRNA(Pro). The polypeptide is Proline--tRNA ligase (Chlorobium limicola (strain DSM 245 / NBRC 103803 / 6330)).